Reading from the N-terminus, the 177-residue chain is Peptide methionine sulfoxide reductase MsrA (177 aa).

Cys15 is a catalytic residue.

This sequence belongs to the MsrA Met sulfoxide reductase family.

It carries out the reaction L-methionyl-[protein] + [thioredoxin]-disulfide + H2O = L-methionyl-(S)-S-oxide-[protein] + [thioredoxin]-dithiol. It catalyses the reaction [thioredoxin]-disulfide + L-methionine + H2O = L-methionine (S)-S-oxide + [thioredoxin]-dithiol. Functionally, has an important function as a repair enzyme for proteins that have been inactivated by oxidation. Catalyzes the reversible oxidation-reduction of methionine sulfoxide in proteins to methionine. This is Peptide methionine sulfoxide reductase MsrA from Listeria innocua serovar 6a (strain ATCC BAA-680 / CLIP 11262).